Consider the following 316-residue polypeptide: Ribose-phosphate pyrophosphokinase (316 aa).

ATP is bound by residues 40–42 (DGE) and 99–100 (RQ). 2 residues coordinate Mg(2+): His-133 and Asp-174. Residue Lys-197 is part of the active site. D-ribose 5-phosphate is bound by residues Arg-199, Asp-223, and 227-231 (DTAGT).

This sequence belongs to the ribose-phosphate pyrophosphokinase family. Class I subfamily. In terms of assembly, homohexamer. Mg(2+) is required as a cofactor.

The protein resides in the cytoplasm. The enzyme catalyses D-ribose 5-phosphate + ATP = 5-phospho-alpha-D-ribose 1-diphosphate + AMP + H(+). Its pathway is metabolic intermediate biosynthesis; 5-phospho-alpha-D-ribose 1-diphosphate biosynthesis; 5-phospho-alpha-D-ribose 1-diphosphate from D-ribose 5-phosphate (route I): step 1/1. Its function is as follows. Involved in the biosynthesis of the central metabolite phospho-alpha-D-ribosyl-1-pyrophosphate (PRPP) via the transfer of pyrophosphoryl group from ATP to 1-hydroxyl of ribose-5-phosphate (Rib-5-P). The protein is Ribose-phosphate pyrophosphokinase of Fusobacterium nucleatum subsp. nucleatum (strain ATCC 25586 / DSM 15643 / BCRC 10681 / CIP 101130 / JCM 8532 / KCTC 2640 / LMG 13131 / VPI 4355).